Reading from the N-terminus, the 227-residue chain is MVSIKSVLAAATAVSSALAAPFDFVPRDNSTALQARQVTPNAEGWHNGYFYSWWSDGGGQVQYTNLEGSRYQVRWRNTGNFVGGKGWNPGTGRTINYGGYFNPQGNGYLAVYGWTRNPLVEYYVIESYGTYNPGSQAQYKGTFYTDGDQYDIFVSTRYNQPSIDGTRTFQQYWSIRKNKRVGGSVNMQNHFNAWQQHGMPLGQHYYQIVATEGYQSSGESDIYVQTH.

A signal peptide spans 1–36 (MVSIKSVLAAATAVSSALAAPFDFVPRDNSTALQAR). Asparagine 29 carries N-linked (GlcNAc...) asparagine glycosylation. A GH11 domain is found at 37 to 225 (QVTPNAEGWH…SSGESDIYVQ (189 aa)). Glutamate 121 serves as the catalytic Nucleophile. Glutamate 212 serves as the catalytic Proton donor.

It belongs to the glycosyl hydrolase 11 (cellulase G) family.

The protein resides in the secreted. The enzyme catalyses Endohydrolysis of (1-&gt;4)-beta-D-xylosidic linkages in xylans.. It participates in glycan degradation; xylan degradation. Its function is as follows. Endo-1,4-beta-xylanase involved in the hydrolysis of xylan, a major structural heterogeneous polysaccharide found in plant biomass representing the second most abundant polysaccharide in the biosphere, after cellulose. In Humicola insolens (Soft-rot fungus), this protein is Endo-1,4-beta-xylanase 2 (xyn2).